Consider the following 98-residue polypeptide: NADH-ubiquinone oxidoreductase chain 4L (98 aa).

A run of 3 helical transmembrane segments spans residues 1 to 21, 25 to 45, and 67 to 87; these read MSLV…GLLM, HLMS…ILST, and AACE…TYGV.

Belongs to the complex I subunit 4L family. As to quaternary structure, core subunit of respiratory chain NADH dehydrogenase (Complex I) which is composed of 45 different subunits.

Its subcellular location is the mitochondrion inner membrane. The catalysed reaction is a ubiquinone + NADH + 5 H(+)(in) = a ubiquinol + NAD(+) + 4 H(+)(out). In terms of biological role, core subunit of the mitochondrial membrane respiratory chain NADH dehydrogenase (Complex I) which catalyzes electron transfer from NADH through the respiratory chain, using ubiquinone as an electron acceptor. Part of the enzyme membrane arm which is embedded in the lipid bilayer and involved in proton translocation. The polypeptide is NADH-ubiquinone oxidoreductase chain 4L (MT-ND4L) (Talpa europaea (European mole)).